The primary structure comprises 391 residues: Acetate kinase (391 aa).

Asparagine 7 contributes to the Mg(2+) binding site. Lysine 14 is a binding site for ATP. Position 88 (arginine 88) interacts with substrate. The active-site Proton donor/acceptor is aspartate 145. Residues 203–207, 278–280, and 326–330 each bind ATP; these read HAGNG, DAR, and GMGEN. Residue glutamate 378 coordinates Mg(2+).

Belongs to the acetokinase family. In terms of assembly, homodimer. It depends on Mg(2+) as a cofactor. Mn(2+) serves as cofactor.

Its subcellular location is the cytoplasm. The catalysed reaction is acetate + ATP = acetyl phosphate + ADP. It participates in metabolic intermediate biosynthesis; acetyl-CoA biosynthesis; acetyl-CoA from acetate: step 1/2. Its function is as follows. Catalyzes the formation of acetyl phosphate from acetate and ATP. Can also catalyze the reverse reaction. This chain is Acetate kinase, found in Phytoplasma mali (strain AT).